A 163-amino-acid polypeptide reads, in one-letter code: Phosphopantetheine adenylyltransferase (163 aa).

Thr11 serves as a coordination point for substrate. ATP contacts are provided by residues 11–12 (TF) and His19. Positions 43, 75, and 89 each coordinate substrate. ATP-binding positions include 90–92 (GLR), Glu100, and 125–131 (YSFISST).

It belongs to the bacterial CoaD family. In terms of assembly, homohexamer. Mg(2+) is required as a cofactor.

Its subcellular location is the cytoplasm. It carries out the reaction (R)-4'-phosphopantetheine + ATP + H(+) = 3'-dephospho-CoA + diphosphate. It functions in the pathway cofactor biosynthesis; coenzyme A biosynthesis; CoA from (R)-pantothenate: step 4/5. Its function is as follows. Reversibly transfers an adenylyl group from ATP to 4'-phosphopantetheine, yielding dephospho-CoA (dPCoA) and pyrophosphate. The polypeptide is Phosphopantetheine adenylyltransferase (Acinetobacter baumannii (strain ACICU)).